A 468-amino-acid chain; its full sequence is Chromosomal replication initiator protein DnaA (468 aa).

The interval 1–84 is domain I, interacts with DnaA modulators; that stretch reads MSSSLWLQCL…RFEVGSRPVA (84 aa). The tract at residues 81 to 104 is disordered; that stretch reads RPVAAPKPAPTRTPADVAAESSAP. The domain II stretch occupies residues 84 to 131; the sequence is AAPKPAPTRTPADVAAESSAPAQLQARKPVHKTWDDDAQAIADINHRS. A domain III, AAA+ region region spans residues 132 to 348; sequence NVNPKHKFNN…GALNRVIANA (217 aa). Gly-176, Gly-178, Lys-179, and Thr-180 together coordinate ATP. The tract at residues 349–468 is domain IV, binds dsDNA; that stretch reads NFTGRPITID…YSNLIRTLSS (120 aa).

The protein belongs to the DnaA family. As to quaternary structure, oligomerizes as a right-handed, spiral filament on DNA at oriC.

Its subcellular location is the cytoplasm. Plays an essential role in the initiation and regulation of chromosomal replication. ATP-DnaA binds to the origin of replication (oriC) to initiate formation of the DNA replication initiation complex once per cell cycle. Binds the DnaA box (a 9 base pair repeat at the origin) and separates the double-stranded (ds)DNA. Forms a right-handed helical filament on oriC DNA; dsDNA binds to the exterior of the filament while single-stranded (ss)DNA is stabiized in the filament's interior. The ATP-DnaA-oriC complex binds and stabilizes one strand of the AT-rich DNA unwinding element (DUE), permitting loading of DNA polymerase. After initiation quickly degrades to an ADP-DnaA complex that is not apt for DNA replication. Binds acidic phospholipids. This chain is Chromosomal replication initiator protein DnaA, found in Vibrio campbellii (strain ATCC BAA-1116).